We begin with the raw amino-acid sequence, 417 residues long: MDIVVLGGGVVGVTSAWYLAKAGHKVTLLERRDGVALETSHANAGQISPGYAAPWAAPGIPLKAAKWLLQKHAPFTVRPTSDPFQLRWMLKMFANCTPAAYATNKGRMVRLAEYSRDCMKTLRDELALDYEGRQLGTLQLFRSQAQLDASKRDIEVLEEYGVPYQSLDASGCEGVEPALARVRGKIVGGLRLPGDETGDCFRFTKALAAEAQKLGVEFVFNCAIDEIELSLGRAVAVRAGEQRFKADAIVCALGSYATGFLRPLGIDLPVYPVKGYSLTLPMTDADAVPRSTVLDETYKVAITRFNERIRVGGMAELSGFNLALNPKRYDTLAMVVGDLFPEGGDISRAEFWTGLRPMTPDGTPLVGPSPVPGLWLNTGHGTLGWTMAAGSGQLLSDLISGSSTAISDEGLTLARYG.

Isoleucine 3 to tryptophan 17 provides a ligand contact to FAD.

This sequence belongs to the DadA oxidoreductase family. Requires FAD as cofactor.

It carries out the reaction a D-alpha-amino acid + A + H2O = a 2-oxocarboxylate + AH2 + NH4(+). Its pathway is amino-acid degradation; D-alanine degradation; NH(3) and pyruvate from D-alanine: step 1/1. Functionally, oxidative deamination of D-amino acids. This Aeromonas salmonicida (strain A449) protein is D-amino acid dehydrogenase.